Reading from the N-terminus, the 461-residue chain is RNA-binding protein ZCH321 (461 aa).

2 C3H1-type zinc fingers span residues 63 to 85 (LCQL…HAAL) and 181 to 208 (ACDF…HICK). The interval 224-243 (TSQARDGGEPGPRGAKKGSV) is disordered. Positions 446-451 (WQHNPY) match the MKT1-binding motif motif.

Functionally, RNA-binding protein involved in regulation of mRNA stability. Promotes mRNA stabilization by recruiting MKT1 and PBP1. Stabilizes transcripts encoding mitochondrial proteins. This chain is RNA-binding protein ZCH321, found in Trypanosoma brucei brucei (strain 927/4 GUTat10.1).